The chain runs to 606 residues: Elongation factor 4 (606 aa).

The region spanning Ser7–Lys189 is the tr-type G domain. GTP-binding positions include Asp19–Thr24 and Asn136–Asp139.

The protein belongs to the TRAFAC class translation factor GTPase superfamily. Classic translation factor GTPase family. LepA subfamily.

It is found in the cell inner membrane. It carries out the reaction GTP + H2O = GDP + phosphate + H(+). In terms of biological role, required for accurate and efficient protein synthesis under certain stress conditions. May act as a fidelity factor of the translation reaction, by catalyzing a one-codon backward translocation of tRNAs on improperly translocated ribosomes. Back-translocation proceeds from a post-translocation (POST) complex to a pre-translocation (PRE) complex, thus giving elongation factor G a second chance to translocate the tRNAs correctly. Binds to ribosomes in a GTP-dependent manner. The protein is Elongation factor 4 of Synechococcus sp. (strain CC9605).